We begin with the raw amino-acid sequence, 139 residues long: Translation initiation factor 2 subunit beta (139 aa).

It belongs to the eIF-2-beta/eIF-5 family. As to quaternary structure, heterotrimer composed of an alpha, a beta and a gamma chain.

Its function is as follows. eIF-2 functions in the early steps of protein synthesis by forming a ternary complex with GTP and initiator tRNA. This is Translation initiation factor 2 subunit beta from Methanococcus aeolicus (strain ATCC BAA-1280 / DSM 17508 / OCM 812 / Nankai-3).